A 69-amino-acid polypeptide reads, in one-letter code: Large ribosomal subunit protein bL31 (69 aa).

The Zn(2+) site is built by Cys-17, Cys-19, Cys-37, and Cys-40.

This sequence belongs to the bacterial ribosomal protein bL31 family. Type A subfamily. In terms of assembly, part of the 50S ribosomal subunit. Requires Zn(2+) as cofactor.

Its function is as follows. Binds the 23S rRNA. This chain is Large ribosomal subunit protein bL31, found in Clostridium botulinum (strain Eklund 17B / Type B).